The following is a 702-amino-acid chain: MA3 DOMAIN-CONTAINING TRANSLATION REGULATORY FACTOR 3 (702 aa).

The tract at residues 1–100 is disordered; that stretch reads MEGFLTDQQR…PNDPNYDSGE (100 aa). Positions 53–65 are enriched in basic residues; sequence VKHRRSHAGRSIR. Basic and acidic residues predominate over residues 81-91; that stretch reads IDTDGDYHIDP. The MI 1 domain maps to 116–237; it reads DYKKAAASII…PPAFLPRAAK (122 aa). Positions 267-274 match the Nuclear localization signal 1 motif; that stretch reads ERRWGGQT. MI domains are found at residues 280 to 401, 414 to 535, and 577 to 697; these read EVKK…PSGE, RFKE…EISS, and DAKD…SLTE. Residues 615–622 carry the Nuclear localization signal 2 motif; sequence VKKALVMG.

The protein belongs to the PDCD4 family. In terms of assembly, interacts with EIN2, ETR2 and EIN4. Binds to EIF4A1. The association with ribosomes is modulated by cellular energy status and TOR activity. As to expression, mostly expressed in vegetative tissues, such as leaves and stems, and, to a lower extent, in roots and reproductive tissues, such as flower buds and flowers. Expressed in seedlings, roots, cauline leaf tips and flowers.

Its subcellular location is the nucleus. It localises to the cytoplasm. The protein resides in the cytosol. Its function is as follows. Involved in target of rapamycin (TOR)-regulated translation control, especially under energy-deficient conditions. Involved in the regulation of the ethylene-mediated signaling pathway. Involved in salt stress responses. Reduced cotyledons size and early flowering. The protein is MA3 DOMAIN-CONTAINING TRANSLATION REGULATORY FACTOR 3 of Arabidopsis thaliana (Mouse-ear cress).